Here is a 419-residue protein sequence, read N- to C-terminus: Glucose-1-phosphate adenylyltransferase (419 aa).

Alpha-D-glucose 1-phosphate contacts are provided by residues tyrosine 107, glycine 172, 187–188 (EK), and serine 205.

It belongs to the bacterial/plant glucose-1-phosphate adenylyltransferase family. As to quaternary structure, homotetramer.

It catalyses the reaction alpha-D-glucose 1-phosphate + ATP + H(+) = ADP-alpha-D-glucose + diphosphate. It participates in glycan biosynthesis; glycogen biosynthesis. Functionally, involved in the biosynthesis of ADP-glucose, a building block required for the elongation reactions to produce glycogen. Catalyzes the reaction between ATP and alpha-D-glucose 1-phosphate (G1P) to produce pyrophosphate and ADP-Glc. This Novosphingobium aromaticivorans (strain ATCC 700278 / DSM 12444 / CCUG 56034 / CIP 105152 / NBRC 16084 / F199) protein is Glucose-1-phosphate adenylyltransferase.